Here is a 292-residue protein sequence, read N- to C-terminus: 4-hydroxy-tetrahydrodipicolinate synthase (292 aa).

T45 is a binding site for pyruvate. Y133 functions as the Proton donor/acceptor in the catalytic mechanism. Residue K161 is the Schiff-base intermediate with substrate of the active site. I203 serves as a coordination point for pyruvate.

It belongs to the DapA family. In terms of assembly, homodimer.

The protein resides in the cytoplasm. The enzyme catalyses L-aspartate 4-semialdehyde + pyruvate = (2S,4S)-4-hydroxy-2,3,4,5-tetrahydrodipicolinate + H2O + H(+). The protein operates within amino-acid biosynthesis; L-lysine biosynthesis via DAP pathway; (S)-tetrahydrodipicolinate from L-aspartate: step 3/4. Functionally, catalyzes the condensation of (S)-aspartate-beta-semialdehyde [(S)-ASA] and pyruvate to 4-hydroxy-tetrahydrodipicolinate (HTPA). This chain is 4-hydroxy-tetrahydrodipicolinate synthase, found in Ectopseudomonas mendocina (strain ymp) (Pseudomonas mendocina).